Consider the following 329-residue polypeptide: MQQQVEPTLKNVLENQTLKWIFVGGKGGVGKTTTSSSLATLFAKSGKRTIIISTDPAHNLSDCFDQKIGSQPTQIKGIENLSAMEIDPTVDPDKLKLPTLQGFMNDQATKSLLSELISSVPGIDEAMSFAELMNSVDEMKYDLIIFDTAPTGHTLRLLNFPNIMEKGLNKLVQLRYNFQNLASQFQGLFGSQEEFDQQMNQMFSKIETMKDTVTKVNAQMKDRNKTTFIGVCIPEFLSMYETERLVQELTKFKIDIHNIVINQVLFPDDQCKMCNARAKMQKKYLDQMIDLYDDFHVVIMPLQENEVRGIDGLKQFCELLLKPKSVPQF.

26–33 (KGGVGKTT) is a binding site for ATP. The active site involves aspartate 55. Glutamate 235 and asparagine 262 together coordinate ATP. The Zn(2+) site is built by cysteine 271 and cysteine 274.

It belongs to the arsA ATPase family. Homodimer.

The protein resides in the cytoplasm. It is found in the endoplasmic reticulum. ATPase required for the post-translational delivery of tail-anchored (TA) proteins to the endoplasmic reticulum. Recognizes and selectively binds the transmembrane domain of TA proteins in the cytosol. This complex then targets to the endoplasmic reticulum by membrane-bound receptors, where the tail-anchored protein is released for insertion. This process is regulated by ATP binding and hydrolysis. ATP binding drives the homodimer towards the closed dimer state, facilitating recognition of newly synthesized TA membrane proteins. ATP hydrolysis is required for insertion. Subsequently, the homodimer reverts towards the open dimer state, lowering its affinity for the membrane-bound receptor, and returning it to the cytosol to initiate a new round of targeting. The polypeptide is ATPase ASNA1 homolog 1 (Paramecium tetraurelia).